A 529-amino-acid polypeptide reads, in one-letter code: MLQPQILTARQQQELNKAIIQYIKPIAEEANDGDLIQKLSESLDVPLGSIDDSVIPNYLEKKWSTVLRLQHKIIDLEGEVSNLRTVIDSQQIVPSASASVIGKDKINWLPSSSIKAFKTQSHQLVQSVSIHPALPIILGGCSDGSLIIWNLVNDESLIPEKIIKAHIRGVNTIAWSKKPVDLSGKGSEAKGIAHVMATCSSDLSIKIWDGATFKHIRTLTGHEHTISSIVFSASKPNILYSVSRDKSVKVWDLVNGYCIKTFIGHSDWVRDIDVISVNSNLLQEQSDINPELGDFLVTCSNDQSIRLSHAESGTGLSLSIGHTHVIECVKFLPFHSNYIIDKYIKENESLFPNISPEVLDDPNYTNLLGYKYCISGGRDNSVKLWLLPPPVFRPHRHPLPSQLNNSQGWLIADLVGHQSWVKSLHIHPNGRFVFSGSDDKTIKIWDLSSLNVNGRVKCVKNLIGHEGFVNDIEFASFEITNNIHASKTADDGKTKTEEDRRNELMKSIESKIRCLFISGGVDNCIRLWS.

The stretch at 68–89 (RLQHKIIDLEGEVSNLRTVIDS) forms a coiled coil. WD repeat units lie at residues 120 to 159 (QSHQ…SLIP), 165 to 218 (AHIR…HIRT), 221 to 261 (GHEH…CIKT), 264 to 318 (GHSD…GLSL), 321 to 395 (GHTH…FRPH), 416 to 455 (GHQS…VNGR), and 496 to 529 (TEED…RLWS).

This sequence belongs to the WD repeat LIS1/nudF family. In terms of assembly, self-associates. Interacts with NDL1 and dynein.

Its subcellular location is the cytoplasm. It is found in the cytoskeleton. The protein localises to the spindle pole. Functionally, positively regulates the activity of the minus-end directed microtubule motor protein dynein. Plays a central role in positioning the mitotic spindle at the bud neck during cell division. Targets cytoplasmic dynein to microtubule plus ends, thereby promoting dynein-mediated microtubule sliding along the bud cortex and consequently the movement of the mitotic spindle to the bud neck. The chain is Nuclear distribution protein PAC1 from Debaryomyces hansenii (strain ATCC 36239 / CBS 767 / BCRC 21394 / JCM 1990 / NBRC 0083 / IGC 2968) (Yeast).